The following is a 460-amino-acid chain: Serine incorporator 5 (460 aa).

The Extracellular segment spans residues 1 to 36 (MCTPCCVSQLACCCGSAACSLCCGCCPKIKQSTSTR). Residues 37 to 57 (FMYALFFMLVTVTCVIMMSPT) form a helical membrane-spanning segment. The Cytoplasmic segment spans residues 58–89 (VEMAMREHIPFYSQMCQQLNAGENCSTLVGYS). A helical membrane pass occupies residues 90–110 (AVYKVCFGMACFFFFFAVFTI). Over 111–124 (RVQNSTGCRAAVHN) the chain is Extracellular. The N-linked (GlcNAc...) asparagine glycan is linked to asparagine 114. A helical membrane pass occupies residues 125 to 145 (GFWFFKFVALLACCAGGFFLP). The Cytoplasmic segment spans residues 146 to 156 (NQDQFLEVWRY). The helical transmembrane segment at 157 to 177 (VGAAGGFLFIIIQLMLLVQFA) threads the bilayer. Residues 178–197 (HRWNQNWSSGATYNKLWYAA) are Extracellular-facing. Asparagine 183 carries N-linked (GlcNAc...) asparagine glycosylation. The helical transmembrane segment at 198-218 (LALVTLVLFSVAVGGMVFMFM) threads the bilayer. Residues 219–230 (YYTHPEACFLNK) are Cytoplasmic-facing. Residues 231–251 (IFLGVNGGLCFIVSLLAISPC) traverse the membrane as a helical segment. Over 252 to 259 (IQTFQPTS) the chain is Extracellular. Residues 260-280 (GLLQPAVITLYVMYLTFSALA) traverse the membrane as a helical segment. The Cytoplasmic segment spans residues 281–311 (SKPIEMVEDEIKGNITVCVFPFKSGLKSDTN). A helical membrane pass occupies residues 312–332 (IVTGVGTAILFCCILYSCLIS). Topologically, residues 333–391 (TTKRSSAALQVYRNDMPENERARCCFCWVDDTEDYDDEKTSGGQNVKYDERDGTVYSYC) are extracellular. The chain crosses the membrane as a helical span at residues 392-412 (FFHFVFFLGSLYVMMTVTNWF). Topologically, residues 413 to 433 (HYDNAKIERLLEGSWSVFWIK) are cytoplasmic. A helical membrane pass occupies residues 434-454 (MASSWVCLFFYMWTLVVPMLF). The Extracellular segment spans residues 455–460 (PQRFQA).

It belongs to the TDE1 family.

It is found in the cell membrane. The catalysed reaction is a 1,2-diacyl-sn-glycero-3-phospho-L-serine(in) = a 1,2-diacyl-sn-glycero-3-phospho-L-serine(out). It carries out the reaction a 1,2-diacyl-sn-glycero-3-phosphocholine(in) = a 1,2-diacyl-sn-glycero-3-phosphocholine(out). The enzyme catalyses a 1,2-diacyl-sn-glycero-3-phosphoethanolamine(in) = a 1,2-diacyl-sn-glycero-3-phosphoethanolamine(out). Its function is as follows. Restriction factor required to restrict infectivity of gammaretroviruses: acts by inhibiting an early step of viral infection. Impairs the penetration of the viral particle into the cytoplasm. Non-ATP-dependent, non-specific lipid transporter for phosphatidylserine, phosphatidylcholine, and phosphatidylethanolamine. Functions as a scramblase that flips lipids in both directions across the membrane. Phospholipid scrambling results in gammaretroviral surface exposure of phosphatidylserine and loss of membrane asymmetry, which leads to loss of infectivity. Enhances the incorporation of serine into phosphatidylserine and sphingolipids. The sequence is that of Serine incorporator 5 (serinc5) from Danio rerio (Zebrafish).